Reading from the N-terminus, the 225-residue chain is Thymidine kinase (225 aa).

Residue 8 to 15 (GPMFSGKT) participates in ATP binding. The Proton acceptor role is filled by Glu92. Position 122 (Tyr122) interacts with substrate. Residues Cys147 and Cys150 each coordinate Zn(2+). Residue 167-171 (KILVG) coordinates substrate. Residues Cys180 and Cys183 each contribute to the Zn(2+) site. Residues 197-207 (SEQINNQTELS) are compositionally biased toward polar residues. The interval 197–225 (SEQINNQTELSEPTRQKESLKIKKRRIDS) is disordered. Residues 208-225 (EPTRQKESLKIKKRRIDS) show a composition bias toward basic and acidic residues.

It belongs to the thymidine kinase family.

It catalyses the reaction thymidine + ATP = dTMP + ADP + H(+). This is Thymidine kinase (TK) from Acanthamoeba polyphaga mimivirus (APMV).